The primary structure comprises 131 residues: Small ribosomal subunit protein uS11 (131 aa).

The protein belongs to the universal ribosomal protein uS11 family. Part of the 30S ribosomal subunit. Interacts with proteins S7 and S18. Binds to IF-3.

Functionally, located on the platform of the 30S subunit, it bridges several disparate RNA helices of the 16S rRNA. Forms part of the Shine-Dalgarno cleft in the 70S ribosome. The protein is Small ribosomal subunit protein uS11 of Pelobacter propionicus (strain DSM 2379 / NBRC 103807 / OttBd1).